We begin with the raw amino-acid sequence, 417 residues long: UPF0761 membrane protein Daci_4966 (417 aa).

Transmembrane regions (helical) follow at residues 49–69 (VLAL…FPIF), 106–126 (QLGM…ILTI), 146–166 (VLIY…SLVL), 187–207 (FIFD…LYHY), 235–255 (ALGL…TFAT), and 256–276 (LPIL…GAVV).

Belongs to the UPF0761 family.

The protein localises to the cell inner membrane. The chain is UPF0761 membrane protein Daci_4966 from Delftia acidovorans (strain DSM 14801 / SPH-1).